A 352-amino-acid polypeptide reads, in one-letter code: Quinolinate synthase (352 aa).

Iminosuccinate-binding residues include histidine 48 and serine 69. A [4Fe-4S] cluster-binding site is contributed by cysteine 114. Iminosuccinate contacts are provided by residues 140-142 (YAN) and serine 157. Cysteine 201 contributes to the [4Fe-4S] cluster binding site. Iminosuccinate contacts are provided by residues 227 to 229 (HPE) and threonine 244. Cysteine 298 is a binding site for [4Fe-4S] cluster.

It belongs to the quinolinate synthase family. Type 1 subfamily. Requires [4Fe-4S] cluster as cofactor.

It localises to the cytoplasm. The enzyme catalyses iminosuccinate + dihydroxyacetone phosphate = quinolinate + phosphate + 2 H2O + H(+). The protein operates within cofactor biosynthesis; NAD(+) biosynthesis; quinolinate from iminoaspartate: step 1/1. In terms of biological role, catalyzes the condensation of iminoaspartate with dihydroxyacetone phosphate to form quinolinate. The polypeptide is Quinolinate synthase (Pseudomonas syringae pv. syringae (strain B728a)).